The chain runs to 465 residues: A-type ATP synthase subunit B (465 aa).

This sequence belongs to the ATPase alpha/beta chains family. As to quaternary structure, has multiple subunits with at least A(3), B(3), C, D, E, F, H, I and proteolipid K(x).

The protein resides in the cell membrane. Its function is as follows. Component of the A-type ATP synthase that produces ATP from ADP in the presence of a proton gradient across the membrane. The B chain is a regulatory subunit. The chain is A-type ATP synthase subunit B from Thermococcus onnurineus (strain NA1).